Consider the following 123-residue polypeptide: Protein Wnt-3a (123 aa).

The O-palmitoleoyl serine moiety is linked to residue Ser1. Cys89 and Cys104 are oxidised to a cystine. The N-linked (GlcNAc...) asparagine glycan is linked to Asn90.

This sequence belongs to the Wnt family. Post-translationally, disulfide bonds have critical and distinct roles in secretion and activity. Loss of each conserved cysteine results in high molecular weight oxidized Wnt oligomers, which are formed through inter-Wnt disulfide bonding. In terms of processing, palmitoleoylation is required for efficient binding to frizzled receptors. Depalmitoleoylation leads to Wnt signaling pathway inhibition.

The protein localises to the secreted. It is found in the extracellular space. The protein resides in the extracellular matrix. Its function is as follows. Ligand for members of the frizzled family of seven transmembrane receptors. Functions in the canonical Wnt signaling pathway that results in activation of transcription factors of the TCF/LEF family. Required for normal embryonic mesoderm development and formation of caudal somites. Required for normal morphogenesis of the developing neural tube. The chain is Protein Wnt-3a (WNT3A) from Meleagris gallopavo (Wild turkey).